Reading from the N-terminus, the 429-residue chain is Inositol-3-phosphate synthase 1 (429 aa).

A helical membrane pass occupies residues 12–32 (LGVLVVGVGGAVATTMIVGTL). 11 residues coordinate NAD(+): alanine 22, valine 23, aspartate 79, alanine 116, alanine 165, threonine 167, tyrosine 201, serine 244, arginine 276, aspartate 277, and lysine 290.

Belongs to the myo-inositol 1-phosphate synthase family. As to quaternary structure, homotetramer. It depends on NAD(+) as a cofactor.

It is found in the membrane. It catalyses the reaction D-glucose 6-phosphate = 1D-myo-inositol 3-phosphate. It functions in the pathway polyol metabolism; myo-inositol biosynthesis; myo-inositol from D-glucose 6-phosphate: step 1/2. Its function is as follows. Key enzyme in myo-inositol biosynthesis pathway that catalyzes the conversion of glucose 6-phosphate to 1D-myo-inositol 3-phosphate in a NAD-dependent manner. This chain is Inositol-3-phosphate synthase 1, found in Bacteroides thetaiotaomicron (strain ATCC 29148 / DSM 2079 / JCM 5827 / CCUG 10774 / NCTC 10582 / VPI-5482 / E50).